Here is a 326-residue protein sequence, read N- to C-terminus: H-2 class I histocompatibility antigen, Q8 alpha chain (326 aa).

An N-terminal signal peptide occupies residues 1–21 (MALTMLLLLVAAALTLIETRA). The segment at 22–111 (GPHSLRYFHT…AQRYYNQSKG (90 aa)) is alpha-1. The Extracellular portion of the chain corresponds to 22–305 (GPHSLRYFHT…EPPPSTVSNM (284 aa)). A glycan (N-linked (GlcNAc...) asparagine) is linked at N107. The alpha-2 stretch occupies residues 112 to 203 (GSHTLQWMYG…QLRKETLLCT (92 aa)). 2 cysteine pairs are disulfide-bonded: C122-C185 and C224-C280. The interval 204 to 295 (DPPKAHVTHH…GLPEPLTLRW (92 aa)) is alpha-3. The region spanning 206–294 (PKAHVTHHPR…EGLPEPLTLR (89 aa)) is the Ig-like C1-type domain. The N-linked (GlcNAc...) asparagine glycan is linked to N277. The interval 296-305 (EPPPSTVSNM) is connecting peptide. Residues 306–326 (ANVAILVVLVAWPSLELWWIL) traverse the membrane as a helical segment.

Belongs to the MHC class I family. In terms of assembly, heterodimer of an alpha chain and a beta chain (beta-2-microglobulin).

The protein localises to the membrane. Functionally, involved in the presentation of foreign antigens to the immune system. This is H-2 class I histocompatibility antigen, Q8 alpha chain (H2-Q8) from Mus musculus (Mouse).